The primary structure comprises 237 residues: Uridylate kinase (237 aa).

12–15 (KLSG) serves as a coordination point for ATP. The tract at residues 20–25 (GEDGLG) is involved in allosteric activation by GTP. Gly54 is a UMP binding site. 2 residues coordinate ATP: Gly55 and Arg59. UMP is bound by residues Asp74 and 135–142 (TGNPFFTT). Thr162, Tyr168, and Asp171 together coordinate ATP.

This sequence belongs to the UMP kinase family. Homohexamer.

Its subcellular location is the cytoplasm. It catalyses the reaction UMP + ATP = UDP + ADP. Its pathway is pyrimidine metabolism; CTP biosynthesis via de novo pathway; UDP from UMP (UMPK route): step 1/1. Its activity is regulated as follows. Allosterically activated by GTP. Inhibited by UTP. In terms of biological role, catalyzes the reversible phosphorylation of UMP to UDP. The chain is Uridylate kinase from Haemophilus influenzae (strain PittEE).